We begin with the raw amino-acid sequence, 260 residues long: Ubiquinone/menaquinone biosynthesis C-methyltransferase UbiE (260 aa).

S-adenosyl-L-methionine-binding positions include T83, D104, and 132-133 (NA).

Belongs to the class I-like SAM-binding methyltransferase superfamily. MenG/UbiE family.

It catalyses the reaction a 2-demethylmenaquinol + S-adenosyl-L-methionine = a menaquinol + S-adenosyl-L-homocysteine + H(+). The enzyme catalyses a 2-methoxy-6-(all-trans-polyprenyl)benzene-1,4-diol + S-adenosyl-L-methionine = a 5-methoxy-2-methyl-3-(all-trans-polyprenyl)benzene-1,4-diol + S-adenosyl-L-homocysteine + H(+). Its pathway is quinol/quinone metabolism; menaquinone biosynthesis; menaquinol from 1,4-dihydroxy-2-naphthoate: step 2/2. It functions in the pathway cofactor biosynthesis; ubiquinone biosynthesis. In terms of biological role, methyltransferase required for the conversion of demethylmenaquinol (DMKH2) to menaquinol (MKH2) and the conversion of 2-polyprenyl-6-methoxy-1,4-benzoquinol (DDMQH2) to 2-polyprenyl-3-methyl-6-methoxy-1,4-benzoquinol (DMQH2). In Bartonella henselae (strain ATCC 49882 / DSM 28221 / CCUG 30454 / Houston 1) (Rochalimaea henselae), this protein is Ubiquinone/menaquinone biosynthesis C-methyltransferase UbiE.